The primary structure comprises 342 residues: Aristolochene synthase prx2 (342 aa).

Mg(2+)-binding residues include Asp-115, Asn-244, Ser-248, and Glu-252. Residues Arg-340 and Tyr-341 each contribute to the (2E,6E)-farnesyl diphosphate site.

This sequence belongs to the terpene synthase family. As to quaternary structure, homodimer. Requires Mg(2+) as cofactor.

The catalysed reaction is (2E,6E)-farnesyl diphosphate = (+)-aristolochene + diphosphate. Its pathway is sesquiterpene biosynthesis; aristolochene biosynthesis; aristolochene from farnesyl diphosphate: step 1/1. Aristolochene synthase; part of the gene cluster that mediates the biosynthesis of PR-toxin, a bicyclic sesquiterpene belonging to the eremophilane class and acting as a mycotoxin. The first step of the pathway is catalyzed by the aristolochene synthase which performs the cyclization of trans,trans-farnesyl diphosphate (FPP) to the bicyclic sesquiterpene aristolochene. Following the formation of aristolochene, the non-oxygenated aristolochene is converted to the trioxygenated intermediate eremofortin B, via 7-epi-neopetasone. This conversion appears to involve three enzymes, a hydroxysterol oxidase-like enzyme, the quinone-oxidase prx3 that forms the quinone-type-structure in the bicyclic nucleus of aristolochene with the C8-oxo group and the C-3 hydroxyl group, and the P450 monooxygenase prx9 that introduces the epoxide at the double bond between carbons 1 and 2. No monoxy or dioxy-intermediates have been reported to be released to the broth, so these three early oxidative reactions may be coupled together. Eremofortin B is further oxidized by another P450 monooxygenase, that introduces a second epoxide between carbons 7 and 11 prior to acetylation to eremofortin A by the acetyltransferase prx11. The second epoxidation may be performed by a second P450 monooxygenase. After the acetylation step, the conversion of eremofortin A to eremofortin C and then to PR-toxin requires only two enzymes. First the conversion of eremofortin A to eremofortin C proceeds by oxidation of the side chain of the molecule at C-12 and is catalyzed by the short-chain oxidoreductase prx1. The cytochrome P450 monooxygenase prx8 also plays a role in this step. The primary alcohol formed at C-12 is finally oxidized by the short-chain alcohol dehydrogenase prx4 that forms PR-toxin. This chain is Aristolochene synthase prx2, found in Penicillium rubens (strain ATCC 28089 / DSM 1075 / NRRL 1951 / Wisconsin 54-1255) (Penicillium chrysogenum).